A 608-amino-acid polypeptide reads, in one-letter code: Mitogen-activated protein kinase kinase kinase 1 (608 aa).

Residues 1 to 13 (MDRILARMKKSTG) show a composition bias toward basic residues. The segment at 1–20 (MDRILARMKKSTGRRGGDKN) is disordered. A regulatory region region spans residues 1 to 325 (MDRILARMKK…VSNTSPIYPD (325 aa)). At S62 the chain carries Phosphoserine. Positions 192-234 (MERTPTIVKSKGYLVPNNVVAVGVGVGGGIKGLRPPVLKPPPA) are binding with MPK4. Disordered stretches follow at residues 228 to 247 (VLKP…GSSW) and 256 to 287 (SETV…EAEE). Residues 271-287 (DGCDEEEGKEEEAEAEE) are compositionally biased toward acidic residues. A Protein kinase domain is found at 333-587 (WQKGQLLGRG…AAELLNHPFV (255 aa)). ATP contacts are provided by residues 339-347 (LGRGSFGSV) and K361. D456 serves as the catalytic Proton acceptor. Phosphoserine is present on S603.

The protein belongs to the protein kinase superfamily. STE Ser/Thr protein kinase family. MAP kinase kinase kinase subfamily. Interacts with MKK1, MMK2 and MPK4. May form a ternary complex composed of MEKK1 and MKK1/MKK2 and MPK4. Interacts with RACK1A, RACK1B and RACK1C. Binds to CRLK1. Post-translationally, phosphorylated by CRLK1 in response to cold.

The protein resides in the cell membrane. The protein localises to the endosome. It catalyses the reaction L-seryl-[protein] + ATP = O-phospho-L-seryl-[protein] + ADP + H(+). The catalysed reaction is L-threonyl-[protein] + ATP = O-phospho-L-threonyl-[protein] + ADP + H(+). Activated by cold via CRLK1-mediated phosphorylation and leading to elevated kinase activity towards MKK2. Its function is as follows. The MEKK1, MKK1/MKK2 and MPK4 function in a signaling pathway that modulates the expression of genes responding to biotic and abiotic stresses and also plays an important role in pathogen defense by negatively regulating innate immunity. Involved in the innate immune MAP kinase signaling cascade (MEKK1, MKK4/MKK5 and MPK3/MPK6) downstream of bacterial flagellin receptor FLS2. May be involved in the cold and salinity stress-mediated MAP kinase signaling cascade (MEKK1, MKK1/MKK2 and MPK4/MPK6). Activates by phosphorylation the downstream MKK2, MKK4 and MKK5 in a calcium-dependent manner. This Arabidopsis thaliana (Mouse-ear cress) protein is Mitogen-activated protein kinase kinase kinase 1 (MEKK1).